The primary structure comprises 242 residues: Carboxy-S-adenosyl-L-methionine synthase (242 aa).

S-adenosyl-L-methionine is bound by residues Y38, 63 to 65 (GCS), 88 to 89 (DN), 116 to 117 (DL), and R199.

This sequence belongs to the class I-like SAM-binding methyltransferase superfamily. Cx-SAM synthase family. In terms of assembly, homodimer.

The catalysed reaction is prephenate + S-adenosyl-L-methionine = carboxy-S-adenosyl-L-methionine + 3-phenylpyruvate + H2O. Catalyzes the conversion of S-adenosyl-L-methionine (SAM) to carboxy-S-adenosyl-L-methionine (Cx-SAM). The polypeptide is Carboxy-S-adenosyl-L-methionine synthase (Methylococcus capsulatus (strain ATCC 33009 / NCIMB 11132 / Bath)).